The sequence spans 663 residues: UvrABC system protein B (663 aa).

The Helicase ATP-binding domain maps to 31–271; the sequence is DNIESGEKAQ…EQSISKIQAE (241 aa). ATP is bound at residue 44-51; sequence GATGTGKT. The short motif at 97–120 is the Beta-hairpin element; that stretch reads YYDYYQPEAYVPSSDTYIEKDSSV. The region spanning 435 to 601 is the Helicase C-terminal domain; it reads QMDDLLGEIN…TIKKDIRDLI (167 aa). The 36-residue stretch at 627–662 folds into the UVR domain; sequence QEAIKQLQKNMQEAAELLDFELAAQLRDLILELKAI.

It belongs to the UvrB family. As to quaternary structure, forms a heterotetramer with UvrA during the search for lesions. Interacts with UvrC in an incision complex.

It is found in the cytoplasm. Its function is as follows. The UvrABC repair system catalyzes the recognition and processing of DNA lesions. A damage recognition complex composed of 2 UvrA and 2 UvrB subunits scans DNA for abnormalities. Upon binding of the UvrA(2)B(2) complex to a putative damaged site, the DNA wraps around one UvrB monomer. DNA wrap is dependent on ATP binding by UvrB and probably causes local melting of the DNA helix, facilitating insertion of UvrB beta-hairpin between the DNA strands. Then UvrB probes one DNA strand for the presence of a lesion. If a lesion is found the UvrA subunits dissociate and the UvrB-DNA preincision complex is formed. This complex is subsequently bound by UvrC and the second UvrB is released. If no lesion is found, the DNA wraps around the other UvrB subunit that will check the other stand for damage. In Streptococcus equi subsp. zooepidemicus (strain MGCS10565), this protein is UvrABC system protein B.